A 320-amino-acid polypeptide reads, in one-letter code: F-box protein At2g02240 (320 aa).

Residues 58–104 (TSPFDVLPEDCISNIISFTSPRDACVAASVSKTFESAVSSDCVWDKF) form the F-box domain.

This chain is F-box protein At2g02240, found in Arabidopsis thaliana (Mouse-ear cress).